The chain runs to 659 residues: Biosynthetic arginine decarboxylase (659 aa).

N6-(pyridoxal phosphate)lysine is present on Lys128. Phe308–Tyr318 contacts substrate.

The protein belongs to the Orn/Lys/Arg decarboxylase class-II family. SpeA subfamily. The cofactor is Mg(2+). Pyridoxal 5'-phosphate is required as a cofactor.

It carries out the reaction L-arginine + H(+) = agmatine + CO2. Its pathway is amine and polyamine biosynthesis; agmatine biosynthesis; agmatine from L-arginine: step 1/1. Functionally, catalyzes the biosynthesis of agmatine from arginine. This Yersinia pestis protein is Biosynthetic arginine decarboxylase.